The chain runs to 460 residues: L-seryl-tRNA(Sec) selenium transferase (460 aa).

N6-(pyridoxal phosphate)lysine is present on Lys-293.

Belongs to the SelA family. Requires pyridoxal 5'-phosphate as cofactor.

The protein resides in the cytoplasm. It carries out the reaction L-seryl-tRNA(Sec) + selenophosphate + H(+) = L-selenocysteinyl-tRNA(Sec) + phosphate. It functions in the pathway aminoacyl-tRNA biosynthesis; selenocysteinyl-tRNA(Sec) biosynthesis; selenocysteinyl-tRNA(Sec) from L-seryl-tRNA(Sec) (bacterial route): step 1/1. In terms of biological role, converts seryl-tRNA(Sec) to selenocysteinyl-tRNA(Sec) required for selenoprotein biosynthesis. This chain is L-seryl-tRNA(Sec) selenium transferase, found in Pasteurella multocida (strain Pm70).